Consider the following 1050-residue polypeptide: NAD-specific glutamate dehydrogenase (1050 aa).

The disordered stretch occupies residues 1-39 (MDSPSAPVPAHKLVDRLKDQTPRHPSPQPTHVSYPKVNG). A compositionally biased stretch (basic and acidic residues) spans 12–22 (KLVDRLKDQTP). Lys594 is an active-site residue.

The protein belongs to the Glu/Leu/Phe/Val dehydrogenases family. In terms of assembly, homotetramer.

It carries out the reaction L-glutamate + NAD(+) + H2O = 2-oxoglutarate + NH4(+) + NADH + H(+). This is NAD-specific glutamate dehydrogenase (gdh-1) from Neurospora crassa (strain ATCC 24698 / 74-OR23-1A / CBS 708.71 / DSM 1257 / FGSC 987).